We begin with the raw amino-acid sequence, 151 residues long: Transcription antitermination protein NusB (151 aa).

This sequence belongs to the NusB family.

In terms of biological role, involved in transcription antitermination. Required for transcription of ribosomal RNA (rRNA) genes. Binds specifically to the boxA antiterminator sequence of the ribosomal RNA (rrn) operons. This Thermus thermophilus (strain ATCC BAA-163 / DSM 7039 / HB27) protein is Transcription antitermination protein NusB.